We begin with the raw amino-acid sequence, 492 residues long: N-succinylglutamate 5-semialdehyde dehydrogenase (492 aa).

Gly220–Gly225 provides a ligand contact to NAD(+). Catalysis depends on residues Glu243 and Cys277.

This sequence belongs to the aldehyde dehydrogenase family. AstD subfamily.

The enzyme catalyses N-succinyl-L-glutamate 5-semialdehyde + NAD(+) + H2O = N-succinyl-L-glutamate + NADH + 2 H(+). The protein operates within amino-acid degradation; L-arginine degradation via AST pathway; L-glutamate and succinate from L-arginine: step 4/5. Functionally, catalyzes the NAD-dependent reduction of succinylglutamate semialdehyde into succinylglutamate. This Salmonella paratyphi B (strain ATCC BAA-1250 / SPB7) protein is N-succinylglutamate 5-semialdehyde dehydrogenase.